The primary structure comprises 491 residues: UDP-N-acetylmuramate--L-alanine ligase (491 aa).

126–132 (GTHGKTT) is a binding site for ATP.

The protein belongs to the MurCDEF family.

It localises to the cytoplasm. The enzyme catalyses UDP-N-acetyl-alpha-D-muramate + L-alanine + ATP = UDP-N-acetyl-alpha-D-muramoyl-L-alanine + ADP + phosphate + H(+). The protein operates within cell wall biogenesis; peptidoglycan biosynthesis. Functionally, cell wall formation. The protein is UDP-N-acetylmuramate--L-alanine ligase of Salmonella agona (strain SL483).